A 197-amino-acid chain; its full sequence is Prefoldin subunit 3 (197 aa).

The interval 1–26 (MASLALRGSSENPAPTKDTTTNPRGI) is disordered. Polar residues predominate over residues 9–23 (SSENPAPTKDTTTNP).

Belongs to the prefoldin subunit alpha family. Heterohexamer of two PFD-alpha type and four PFD-beta type subunits.

Functionally, prefoldin subunit; part of the gene cluster that mediates the biosynthesis of elsinochromes, pigments consisting of at least four interconvertible tautomers (A, B, C and D) that have a core phenolic quinone to which various side chains are attached and which play an important role in fungal pathogenesis. The non-reducing polyketide synthase PKS1 was proposed to iteratively catalyze decarboxylation between acetyl-CoA and malonyl-CoA subunits for polyketide chain elongation. The released polyketide undergoes cyclization to form an aromatic ring, and proceeds via serial modification steps to produce the heptaketide back- bone of elsinochrome. As elsinochrome has a symmetrical structure, two identical heptaketides are fused to form a core 1,2-dihydrobenzo-perylene ring structure, which can then be successively modified to produce the various derivatives of elsinochrome. Some of these reactions may be cooperatively carried out, at least in part, by the products of RDT1, OXR1 and PKS1. PRF1, embedded within the elsinochrome cluster possibly functions to stabilize some of the biosynthetic enzymes required for elsinochrome production. As prefoldin is a hexamer containing 2 a and 4 b subunits, additional prefoldin subunits, whose coding genes may not immediately link to the elsinochrome biosynthetic gene cluster, are required to fulfill the chaperone function. In addition, no methyltransferase-coding gene exists within the biosynthetic gene cluster, even though elsinochrome has four methyl groups at positions C3, C7, C8 and C12. Apparently, the identified gene cluster does not contain the entire entourage of genes responsible for elsinochrome biosynthesis. Once elsinochrome is synthesized, it must be exported outside the fungal cells, which is probably accomplished by the ECT1 transporter, to avoid toxicity. The protein is Prefoldin subunit 3 of Elsinoe fawcettii (Citrus scab fungus).